Here is a 1496-residue protein sequence, read N- to C-terminus: Carbamoyl-phosphate synthase [ammonia], mitochondrial (1496 aa).

The N-terminal 33 residues, 1–33, are a transit peptide targeting the mitochondrion; it reads MTRILSVFKTAKTGVLNAAAHRYRGFSKAGVRL. Positions 34–214 are anthranilate phosphoribosyltransferase homolog; sequence MSVKAQTANL…TKVFGKGNPV (181 aa). Positions 215 to 401 constitute a Glutamine amidotransferase type-1 domain; that stretch reads RIVAVDCGVK…MSLIKKGKGT (187 aa). Cys290 functions as the For GATase activity in the catalytic mechanism. 2 consecutive ATP-grasp domains span residues 548–740 and 1090–1281; these read SDKL…KIAL and SAVL…KVMI. The MGS-like domain occupies 1352-1496; sequence FKLPQKGILI…YRQFGGAKPS (145 aa). 6 residues coordinate N-acetyl-L-glutamate: Thr1388, Thr1391, Trp1407, Asn1433, Asn1436, and Asn1445.

It is found in the mitochondrion. The catalysed reaction is hydrogencarbonate + NH4(+) + 2 ATP = carbamoyl phosphate + 2 ADP + phosphate + 2 H(+). Its activity is regulated as follows. Requires N-acetyl-L-glutamate (NAG) as an allosteric activator. In terms of biological role, involved in the urea cycle of ureotelic animals where the enzyme plays an important role in removing excess ammonia from the cell. The protein is Carbamoyl-phosphate synthase [ammonia], mitochondrial of Aquarana catesbeiana (American bullfrog).